The primary structure comprises 43 residues: METATLIAISISGLLVSFTGYALYIAFGQPSQQLRDPFEEHGD.

Residues 7-27 (IAISISGLLVSFTGYALYIAF) traverse the membrane as a helical segment.

This sequence belongs to the PsbN family.

It localises to the plastid. The protein resides in the chloroplast thylakoid membrane. In terms of biological role, may play a role in photosystem I and II biogenesis. This chain is Protein PsbN, found in Glycine max (Soybean).